The sequence spans 358 residues: Ribosomal RNA-processing protein 8 (358 aa).

The disordered stretch occupies residues 1–81 (MKPFEVPPWE…PQDSSDDDYE (81 aa)). Residues 30–44 (AKKKPKKKKPKKKKA) show a composition bias toward basic residues. A phosphoserine mark is found at S75 and S76. H185, G220, D238, and C267 together coordinate S-adenosyl-L-methionine.

The protein belongs to the methyltransferase superfamily. RRP8 family.

The protein resides in the nucleus. It is found in the nucleolus. In terms of biological role, probable methyltransferase required to silence rDNA. This is Ribosomal RNA-processing protein 8 from Drosophila melanogaster (Fruit fly).